We begin with the raw amino-acid sequence, 395 residues long: Acetate kinase (395 aa).

Asn-7 is a Mg(2+) binding site. Lys-14 lines the ATP pocket. A substrate-binding site is contributed by Arg-88. Asp-145 functions as the Proton donor/acceptor in the catalytic mechanism. Residues 205–209 (HLGNG), 279–281 (DFR), and 327–331 (GIGEN) each bind ATP. Glu-381 lines the Mg(2+) pocket.

Belongs to the acetokinase family. Homodimer. The cofactor is Mg(2+). Mn(2+) serves as cofactor.

The protein localises to the cytoplasm. It carries out the reaction acetate + ATP = acetyl phosphate + ADP. The protein operates within metabolic intermediate biosynthesis; acetyl-CoA biosynthesis; acetyl-CoA from acetate: step 1/2. Its function is as follows. Catalyzes the formation of acetyl phosphate from acetate and ATP. Can also catalyze the reverse reaction. The sequence is that of Acetate kinase from Campylobacter jejuni subsp. jejuni serotype O:6 (strain 81116 / NCTC 11828).